A 454-amino-acid chain; its full sequence is tRNA modification GTPase MnmE (454 aa).

(6S)-5-formyl-5,6,7,8-tetrahydrofolate-binding residues include Arg23, Glu80, and Lys120. Residues 216-377 (GMKVVIAGRP…LRNHLKQSMG (162 aa)) form the TrmE-type G domain. Asn226 lines the K(+) pocket. Residues 226–231 (NAGKSS), 245–251 (TDIAGTT), 270–273 (DTAG), 335–338 (NKAD), and 358–360 (SAR) contribute to the GTP site. Ser230 contacts Mg(2+). 3 residues coordinate K(+): Thr245, Ile247, and Thr250. Thr251 contributes to the Mg(2+) binding site. Lys454 is a (6S)-5-formyl-5,6,7,8-tetrahydrofolate binding site.

It belongs to the TRAFAC class TrmE-Era-EngA-EngB-Septin-like GTPase superfamily. TrmE GTPase family. In terms of assembly, homodimer. Heterotetramer of two MnmE and two MnmG subunits. Requires K(+) as cofactor.

It is found in the cytoplasm. Exhibits a very high intrinsic GTPase hydrolysis rate. Involved in the addition of a carboxymethylaminomethyl (cmnm) group at the wobble position (U34) of certain tRNAs, forming tRNA-cmnm(5)s(2)U34. The polypeptide is tRNA modification GTPase MnmE (Shigella dysenteriae serotype 1 (strain Sd197)).